The chain runs to 120 residues: NAD(P)H-quinone oxidoreductase subunit 3, chloroplastic (120 aa).

3 helical membrane passes run 9–29 (IFWAFLMISSVIPILAFLISG), 64–84 (MFALVFVVFDVETVFLYPWAM), and 88–108 (VLGVSAFIEALIFVLIPIVGS).

Belongs to the complex I subunit 3 family. In terms of assembly, NDH is composed of at least 16 different subunits, 5 of which are encoded in the nucleus.

The protein localises to the plastid. It localises to the chloroplast thylakoid membrane. The enzyme catalyses a plastoquinone + NADH + (n+1) H(+)(in) = a plastoquinol + NAD(+) + n H(+)(out). It carries out the reaction a plastoquinone + NADPH + (n+1) H(+)(in) = a plastoquinol + NADP(+) + n H(+)(out). Functionally, NDH shuttles electrons from NAD(P)H:plastoquinone, via FMN and iron-sulfur (Fe-S) centers, to quinones in the photosynthetic chain and possibly in a chloroplast respiratory chain. The immediate electron acceptor for the enzyme in this species is believed to be plastoquinone. Couples the redox reaction to proton translocation, and thus conserves the redox energy in a proton gradient. The polypeptide is NAD(P)H-quinone oxidoreductase subunit 3, chloroplastic (Illicium oligandrum (Star anise)).